Consider the following 1271-residue polypeptide: DNA-directed RNA polymerase subunit beta (1271 aa).

The protein belongs to the RNA polymerase beta chain family. The RNAP catalytic core consists of 2 alpha, 1 beta, 1 beta' and 1 omega subunit. When a sigma factor is associated with the core the holoenzyme is formed, which can initiate transcription.

It carries out the reaction RNA(n) + a ribonucleoside 5'-triphosphate = RNA(n+1) + diphosphate. DNA-dependent RNA polymerase catalyzes the transcription of DNA into RNA using the four ribonucleoside triphosphates as substrates. The sequence is that of DNA-directed RNA polymerase subunit beta from Acholeplasma laidlawii (strain PG-8A).